The following is a 141-amino-acid chain: Hemoglobin subunit alpha-1/2 (141 aa).

Residues 1 to 141 (VLSPTDKTNV…VSTVLTSKYR (141 aa)) form the Globin domain. Ser3 is modified (phosphoserine). Position 7 is an N6-succinyllysine (Lys7). Thr8 carries the phosphothreonine modification. Lys11 is subject to N6-succinyllysine. Lys16 is subject to N6-acetyllysine; alternate. An N6-succinyllysine; alternate modification is found at Lys16. Tyr24 is modified (phosphotyrosine). Lys40 carries the post-translational modification N6-succinyllysine. Ser49 is subject to Phosphoserine. An O2-binding site is contributed by His58. His87 serves as a coordination point for heme b. Ser102 bears the Phosphoserine mark. Thr108 carries the post-translational modification Phosphothreonine. Ser124 is modified (phosphoserine). Phosphothreonine occurs at positions 134 and 137. The residue at position 138 (Ser138) is a Phosphoserine.

Belongs to the globin family. Heterotetramer of two alpha chains and two beta chains. In terms of tissue distribution, red blood cells.

Functionally, involved in oxygen transport from the lung to the various peripheral tissues. The chain is Hemoglobin subunit alpha-1/2 from Tapirus terrestris (Lowland tapir).